A 263-amino-acid polypeptide reads, in one-letter code: MEDGGKHFVFVHGLGHGAWCWYRVVAALRAAGHRATALDMAAAGAHPARADEVGSLEEYSRPLLDAVAAAAPGERLVLVGHSLGGLSLALAMERFPDKVAAAVFLAACMPAAGKHMGITLEEFMRRIKPDFFMDSKTIVLNTNQEPRTAVLLGPKLLAEKLYNRSPPEDLTLATMLVRPGTNYIDDPIMKDETLLTEGNYGSVKRVFLVAMDDASSDEEMQRWTIDLSPGVEVEELAGADHMAMCSKPRELCDLLLRIAAKYD.

The active-site Acyl-ester intermediate is the S82. Catalysis depends on charge relay system residues D213 and H241.

It belongs to the AB hydrolase superfamily.

This is Probable esterase PIR7A (PIR7A) from Oryza sativa subsp. indica (Rice).